Reading from the N-terminus, the 187-residue chain is HTH-type transcriptional regulator NfxB (187 aa).

A DNA-binding region (H-T-H motif) is located at residues 26–45 (LKELAEAAGVSKATLHRFCG).

Confers resistance to guinolones. May negatively regulate the expression of genes that are associated with cell permeability to drugs. This Pseudomonas aeruginosa (strain ATCC 15692 / DSM 22644 / CIP 104116 / JCM 14847 / LMG 12228 / 1C / PRS 101 / PAO1) protein is HTH-type transcriptional regulator NfxB (nfxB).